The primary structure comprises 95 residues: Parvalbumin alpha (95 aa).

Ser19 bears the Phosphoserine mark. 2 consecutive EF-hand domains span residues 34-69 (KNRE…FSAD) and 73-95 (LSDT…KIGA). Residues Asp47, Asp49, Ser51, Phe53, Glu55, Glu58, Asp86, Asp88, Asp90, and Lys92 each coordinate Ca(2+).

It belongs to the parvalbumin family.

Its function is as follows. In muscle, parvalbumin is thought to be involved in relaxation after contraction. It binds two calcium ions. The polypeptide is Parvalbumin alpha (PVALB) (Cavia porcellus (Guinea pig)).